Consider the following 436-residue polypeptide: Prenyltransferase nscD (436 aa).

The protein belongs to the tryptophan dimethylallyltransferase family.

It participates in secondary metabolite biosynthesis. Its function is as follows. Prenyltransferase; part of the gene cluster that mediates the biosynthesis of neosartoricin B, a prenylated anthracenone that probably exhibits T-cell antiproliferative activity, suggestive of a physiological role as an immunosuppressive agent. The non-reducing polyketide synthase nscA probably synthesizes and cyclizes the decaketide backbone. The hydrolase nscB then mediates the product release through hydrolysis followed by spontaneous decarboxylation. The prenyltransferase nscD catalyzes the addition of the dimethylallyl group to the aromatic C5. The FAD-dependent monooxygenase nscC is then responsible for the stereospecific hydroxylation at C2. Neosartoricin B can be converted into two additional compounds neosartoricins C and D. Neosartoricin C is a spirocyclic compound that is cyclized through the attack of C3 hydroxyl on C14, followed by dehydration. On the other hand, neosartoricin D is a further cyclized compound in which attack of C2 on C14 in neosartoricin C results in the formation of the acetal-containing dioxabicyclo-octanone ring. Both of these compounds are novel and possibly represent related metabolites of the gene cluster. The chain is Prenyltransferase nscD from Trichophyton tonsurans (strain CBS 112818) (Scalp ringworm fungus).